Reading from the N-terminus, the 256-residue chain is Lysosomal membrane ascorbate-dependent ferrireductase CYB561A3 (256 aa).

Residues 1 to 3 lie on the Cytoplasmic side of the membrane; that stretch reads MAS. A helical transmembrane segment spans residues 4–24; sequence GWFYMSCMVLGSLGSMCILFT. Positions 12-219 constitute a Cytochrome b561 domain; sequence VLGSLGSMCI…FGLLVLYILL (208 aa). Over 25 to 40 the chain is Lumenal; that stretch reads TYWMQYWRGGFAWDGT. A helical membrane pass occupies residues 41–61; that stretch reads VLMFNWHPVLMVSGMVVLYGA. Positions 47 and 67 each coordinate heme b. Topologically, residues 62–83 are cytoplasmic; sequence ASLVYRLPASWVGPKLPWKVLH. L-ascorbate is bound by residues Lys-76 and Lys-80. His-83 is a binding site for heme b. A helical transmembrane segment spans residues 84-104; it reads AALHLLAFTVTVVGLTAVFGF. Over 105–119 the chain is Lumenal; it reads HNHSKITHLYSLHSW. An N-linked (GlcNAc...) asparagine glycan is attached at Asn-106. Residues 112-115 and His-117 each bind heme b; that span reads HLYS. A helical membrane pass occupies residues 120–140; sequence LGITTVALFACQWFLGFAVFL. Residues 141–154 lie on the Cytoplasmic side of the membrane; that stretch reads LPWASQWLRSLLKP. Arg-149 serves as a coordination point for L-ascorbate. The helical transmembrane segment at 155 to 175 threads the bilayer; that stretch reads VHVFFGACILSLSIASVISGI. Heme b contacts are provided by His-156 and Glu-177. The Lumenal portion of the chain corresponds to 176 to 202; sequence NEKLFFVLKNATRPYSSLPGEAVFANS. A helical transmembrane segment spans residues 203–223; that stretch reads TGILVVSFGLLVLYILLASSW. Arg-224 provides a ligand contact to heme b. Topologically, residues 224–256 are cytoplasmic; sequence RRPDPGALTDRQVWLLVSHYRWDKAKKACFAPC.

Homodimer. Requires heme b as cofactor. N-glycosylated.

Its subcellular location is the late endosome membrane. The protein resides in the lysosome membrane. The enzyme catalyses Fe(3+)(out) + L-ascorbate(in) = monodehydro-L-ascorbate radical(in) + Fe(2+)(out) + H(+). Its function is as follows. Transmembrane reductase that uses ascorbate as an electron donor in the cytoplasm and transfers electrons across membranes to reduce iron cations Fe(3+) into Fe(2+) in the lumen of the late endosome and lysosome. Reduced iron can then be extruded from the late endosome and lysosome to the cytoplasm by divalent metal-specific transporters. It is therefore most probably involved in endosomal and lysosomal cellular iron homeostasis. In Rattus norvegicus (Rat), this protein is Lysosomal membrane ascorbate-dependent ferrireductase CYB561A3.